The following is a 503-amino-acid chain: ATP synthase subunit alpha (503 aa).

Residue 169–176 (GDRKTGKT) participates in ATP binding.

Belongs to the ATPase alpha/beta chains family. In terms of assembly, F-type ATPases have 2 components, CF(1) - the catalytic core - and CF(0) - the membrane proton channel. CF(1) has five subunits: alpha(3), beta(3), gamma(1), delta(1), epsilon(1). CF(0) has three main subunits: a(1), b(2) and c(9-12). The alpha and beta chains form an alternating ring which encloses part of the gamma chain. CF(1) is attached to CF(0) by a central stalk formed by the gamma and epsilon chains, while a peripheral stalk is formed by the delta and b chains.

It localises to the cell membrane. It catalyses the reaction ATP + H2O + 4 H(+)(in) = ADP + phosphate + 5 H(+)(out). Functionally, produces ATP from ADP in the presence of a proton gradient across the membrane. The alpha chain is a regulatory subunit. This is ATP synthase subunit alpha from Lactobacillus johnsonii (strain CNCM I-12250 / La1 / NCC 533).